Consider the following 208-residue polypeptide: Transmembrane emp24 domain-containing protein p24beta2 (208 aa).

An N-terminal signal peptide occupies residues 1-21 (MSLKGTIVLLGLLWSFQATLG). Topologically, residues 22 to 176 (IRFVIDREEC…ENMSKRAVHK (155 aa)) are lumenal. In terms of domain architecture, GOLD spans 29 to 116 (EECFSHKAEY…HETIDFDVQL (88 aa)). Positions 134–149 (LMEQISKLEEALYNIQ) form a coiled coil. N-linked (GlcNAc...) asparagine glycosylation is present at Asn-168. A helical transmembrane segment spans residues 177 to 195 (ALFESFALIGASFLQVYLL). The Cytoplasmic segment spans residues 196–208 (RRLFERKLGMSRV). Residues 198–199 (LF) carry the COPII vesicle coat-binding motif. Positions 198-208 (LFERKLGMSRV) match the COPI vesicle coat-binding motif. A Required for the export from the endoplasmic reticulum to the Golgi motif is present at residues 207 to 208 (RV).

Belongs to the EMP24/GP25L family. In terms of assembly, probably oligomerizes with other members of the EMP24/GP25L family. Associates with the COPI vesicle coat (coatomer). Associates with the COPII vesicle coat (coatomer). Interacts with p24delta5.

The protein localises to the golgi apparatus. Its subcellular location is the cis-Golgi network membrane. The protein resides in the golgi stack membrane. Involved in vesicular protein trafficking. Mainly functions in the early secretory pathway but also in post-Golgi membranes. Thought to act as cargo receptor at the lumenal side for incorporation of secretory cargo molecules into transport vesicles and to be involved in vesicle coat formation at the cytoplasmic side. Interacts with p24delta5 at endoplasmic reticulum export sites for endoplasmic reticulum exit and coupled transport to the Golgi apparatus. The protein is Transmembrane emp24 domain-containing protein p24beta2 of Arabidopsis thaliana (Mouse-ear cress).